Reading from the N-terminus, the 469-residue chain is Cysteine--tRNA ligase (469 aa).

C28 contacts Zn(2+). The short motif at 30 to 40 (CTVYDLCHIGH) is the 'HIGH' region element. Residues C216, H241, and E245 each coordinate Zn(2+). Residues 273 to 277 (KMSKS) carry the 'KMSKS' region motif. K276 contributes to the ATP binding site.

This sequence belongs to the class-I aminoacyl-tRNA synthetase family. In terms of assembly, monomer. Zn(2+) is required as a cofactor.

It is found in the cytoplasm. It carries out the reaction tRNA(Cys) + L-cysteine + ATP = L-cysteinyl-tRNA(Cys) + AMP + diphosphate. This Colwellia psychrerythraea (strain 34H / ATCC BAA-681) (Vibrio psychroerythus) protein is Cysteine--tRNA ligase.